A 137-amino-acid chain; its full sequence is AVCVSLLGAANIPPQHLNLYQFKEMIRYTIPCEKTWGEYADYGCYCGAGGSGTPIDALDRCCYVHDNCYGDAAKIRGCDPKTQSYSYKLTQRTIICYGAAGTCARVVCDCDRTAALCFGNSEYIEGHKNIDTKRHCQ.

The first 9 residues, 1–9 (AVCVSLLGA), serve as a signal peptide directing secretion. Residues 10 to 17 (ANIPPQHL) constitute a propeptide that is removed on maturation. Cystine bridges form between cysteine 44–cysteine 136, cysteine 46–cysteine 62, cysteine 61–cysteine 117, cysteine 68–cysteine 110, cysteine 78–cysteine 103, and cysteine 96–cysteine 108. Residues tyrosine 45, glycine 47, and glycine 49 each coordinate Ca(2+). The active site involves histidine 65. Aspartate 66 contacts Ca(2+). Aspartate 111 is a catalytic residue.

It belongs to the phospholipase A2 family. Group I subfamily. D49 sub-subfamily. As to quaternary structure, heterodimer; disulfide-linked. The A chains have phospholipase A2 activity and the B chains show homology with the basic protease inhibitors. The cofactor is Ca(2+). As to expression, expressed by the venom gland.

It is found in the secreted. The enzyme catalyses a 1,2-diacyl-sn-glycero-3-phosphocholine + H2O = a 1-acyl-sn-glycero-3-phosphocholine + a fatty acid + H(+). Its function is as follows. Snake venom phospholipase A2 (PLA2) that inhibits neuromuscular transmission by blocking acetylcholine release from the nerve termini. PLA2 catalyzes the calcium-dependent hydrolysis of the 2-acyl groups in 3-sn-phosphoglycerides. The protein is Acidic phospholipase A2 beta-bungarotoxin A6 chain of Bungarus multicinctus (Many-banded krait).